A 61-amino-acid chain; its full sequence is Conotoxin Bt5.1 (61 aa).

The N-terminal stretch at 1-22 (MRGLPVFVILLLLIASEPSVDA) is a signal peptide. Residues 23-48 (RPKTKADVPLTSLNDNAKRTLQILRN) constitute a propeptide that is removed on maturation.

Belongs to the conotoxin T superfamily. In terms of processing, contains 2 disulfide bonds that can be either 'C1-C3, C2-C4' or 'C1-C4, C2-C3', since these disulfide connectivities have been observed for conotoxins with cysteine framework V (for examples, see AC P0DQQ7 and AC P81755). In terms of tissue distribution, expressed by the venom duct.

The protein localises to the secreted. The chain is Conotoxin Bt5.1 from Conus betulinus (Beech cone).